The sequence spans 101 residues: Acylphosphatase (101 aa).

The Acylphosphatase-like domain occupies arginine 12–arginine 98. Catalysis depends on residues arginine 27 and asparagine 45.

Belongs to the acylphosphatase family.

It catalyses the reaction an acyl phosphate + H2O = a carboxylate + phosphate + H(+). The sequence is that of Acylphosphatase (acyP) from Nostoc sp. (strain PCC 7120 / SAG 25.82 / UTEX 2576).